The sequence spans 85 residues: HPr-like protein Crh (85 aa).

An HPr domain is found at 1–85 (MVQQKVEVRL…KLAAYVQEEV (85 aa)). Ser-46 carries the post-translational modification Phosphoserine; by HPrK/P.

Belongs to the HPr family. Mixture of monomers and homodimers. Interacts with CcpA as a monomer.

Its function is as follows. Along with seryl-phosphorylated HPr, phosphorylated Crh is implicated in carbon catabolite repression (CCR) of levanase, inositol dehydrogenase, and beta-xylosidase. Exerts its effect on CCR by interacting with CcpA. The chain is HPr-like protein Crh (crh) from Bacillus subtilis (strain 168).